Reading from the N-terminus, the 121-residue chain is Large ribosomal subunit protein bL12 (121 aa).

It belongs to the bacterial ribosomal protein bL12 family. Homodimer. Part of the ribosomal stalk of the 50S ribosomal subunit. Forms a multimeric L10(L12)X complex, where L10 forms an elongated spine to which 2 to 4 L12 dimers bind in a sequential fashion. Binds GTP-bound translation factors.

Forms part of the ribosomal stalk which helps the ribosome interact with GTP-bound translation factors. Is thus essential for accurate translation. The sequence is that of Large ribosomal subunit protein bL12 from Acinetobacter baylyi (strain ATCC 33305 / BD413 / ADP1).